A 186-amino-acid polypeptide reads, in one-letter code: Ribosome-recycling factor (186 aa).

The protein belongs to the RRF family.

Its subcellular location is the cytoplasm. Its function is as follows. Responsible for the release of ribosomes from messenger RNA at the termination of protein biosynthesis. May increase the efficiency of translation by recycling ribosomes from one round of translation to another. The sequence is that of Ribosome-recycling factor from Rhodopseudomonas palustris (strain ATCC BAA-98 / CGA009).